A 296-amino-acid polypeptide reads, in one-letter code: Ribosomal RNA small subunit methyltransferase A (296 aa).

6 residues coordinate S-adenosyl-L-methionine: N31, L33, G58, E79, D104, and N129.

The protein belongs to the class I-like SAM-binding methyltransferase superfamily. rRNA adenine N(6)-methyltransferase family. RsmA subfamily.

It localises to the cytoplasm. It carries out the reaction adenosine(1518)/adenosine(1519) in 16S rRNA + 4 S-adenosyl-L-methionine = N(6)-dimethyladenosine(1518)/N(6)-dimethyladenosine(1519) in 16S rRNA + 4 S-adenosyl-L-homocysteine + 4 H(+). In terms of biological role, specifically dimethylates two adjacent adenosines (A1518 and A1519) in the loop of a conserved hairpin near the 3'-end of 16S rRNA in the 30S particle. May play a critical role in biogenesis of 30S subunits. This Shouchella clausii (strain KSM-K16) (Alkalihalobacillus clausii) protein is Ribosomal RNA small subunit methyltransferase A.